Here is a 185-residue protein sequence, read N- to C-terminus: Elongation factor P (185 aa).

The protein belongs to the elongation factor P family.

Its subcellular location is the cytoplasm. Its pathway is protein biosynthesis; polypeptide chain elongation. Involved in peptide bond synthesis. Stimulates efficient translation and peptide-bond synthesis on native or reconstituted 70S ribosomes in vitro. Probably functions indirectly by altering the affinity of the ribosome for aminoacyl-tRNA, thus increasing their reactivity as acceptors for peptidyl transferase. The sequence is that of Elongation factor P from Staphylococcus saprophyticus subsp. saprophyticus (strain ATCC 15305 / DSM 20229 / NCIMB 8711 / NCTC 7292 / S-41).